The chain runs to 105 residues: ATP-dependent Clp protease adapter protein ClpS (105 aa).

The protein belongs to the ClpS family. Binds to the N-terminal domain of the chaperone ClpA.

Functionally, involved in the modulation of the specificity of the ClpAP-mediated ATP-dependent protein degradation. This chain is ATP-dependent Clp protease adapter protein ClpS, found in Aeromonas hydrophila subsp. hydrophila (strain ATCC 7966 / DSM 30187 / BCRC 13018 / CCUG 14551 / JCM 1027 / KCTC 2358 / NCIMB 9240 / NCTC 8049).